Consider the following 115-residue polypeptide: NADH-ubiquinone oxidoreductase chain 3 (115 aa).

A run of 3 helical transmembrane segments spans residues 4-24 (LTAL…AFWL), 55-75 (FFLV…LLPL), and 86-106 (VMML…AYEW).

The protein belongs to the complex I subunit 3 family. In terms of assembly, core subunit of respiratory chain NADH dehydrogenase (Complex I) which is composed of 45 different subunits. Interacts with TMEM186. Interacts with TMEM242.

Its subcellular location is the mitochondrion inner membrane. The enzyme catalyses a ubiquinone + NADH + 5 H(+)(in) = a ubiquinol + NAD(+) + 4 H(+)(out). Its function is as follows. Core subunit of the mitochondrial membrane respiratory chain NADH dehydrogenase (Complex I) which catalyzes electron transfer from NADH through the respiratory chain, using ubiquinone as an electron acceptor. Essential for the catalytic activity of complex I. In Isthmomys pirrensis (Mount Pirri Isthmus rat), this protein is NADH-ubiquinone oxidoreductase chain 3.